We begin with the raw amino-acid sequence, 174 residues long: UBX domain-containing protein 5 (174 aa).

Residues Q8 to Q58 are a coiled coil. The UBX domain occupies R74 to R120.

Forms a complex composed of deubiquitinating enzyme atx-3, adapter ubxn-5 and cdc-48.1. Interacts with atx-3 (via C-terminus). Interacts with cdc-48.1 (via N-terminus) and cdc-48.2. As to expression, specifically expressed in the germline.

Its function is as follows. Probably acts as an adapter for ATPase cdc-48.1 and/or cdc-48.2, conferring substrate specificity. Unlike other UBX domain-containing protein does not bind 'Lys-48'-polyubiquitinated chain. The chain is UBX domain-containing protein 5 from Caenorhabditis elegans.